A 78-amino-acid chain; its full sequence is RNA-binding protein KhpA (78 aa).

A KH domain is found at 29 to 78; it reads TIIYELTVAKPDIGKIIGKEGRTIKAIRTLLVSVASRNNVKVSLEIMEDK.

It belongs to the KhpA RNA-binding protein family.

Its subcellular location is the cytoplasm. Its function is as follows. A probable RNA-binding protein. In Chlamydia caviae (strain ATCC VR-813 / DSM 19441 / 03DC25 / GPIC) (Chlamydophila caviae), this protein is RNA-binding protein KhpA.